A 30-amino-acid chain; its full sequence is Cycloviolacin-H3 (30 aa).

Positions 1 to 30 (GLPVCGETCFGGTCNTPGCICDPWPVCTRN) form a cross-link, cyclopeptide (Gly-Asn). 3 cysteine pairs are disulfide-bonded: cysteine 5–cysteine 19, cysteine 9–cysteine 21, and cysteine 14–cysteine 27.

In terms of processing, this is a cyclic peptide.

Probably participates in a plant defense mechanism. This chain is Cycloviolacin-H3, found in Viola hederacea (Australian violet).